We begin with the raw amino-acid sequence, 318 residues long: Olfactory receptor 5G26 (318 aa).

The Extracellular segment spans residues 1–28 (MMHRNQTVVTEFFFTGLTSSFHLQIVLF). A glycan (N-linked (GlcNAc...) asparagine) is linked at Asn5. The helical transmembrane segment at 29–49 (LTFLCVYLATLLGNLGMIILI) threads the bilayer. Residues 50–56 (HLDTRLH) are Cytoplasmic-facing. Residues 57-77 (IPMYFFLSHLSFVDACSSSVI) form a helical membrane-spanning segment. Residues 78 to 93 (SPKMLSDMFVDKKVIS) lie on the Extracellular side of the membrane. A helical membrane pass occupies residues 94-114 (FLGCAIQLCLFSQFVVTECFL). A disulfide bridge links Cys97 with Cys189. The Cytoplasmic segment spans residues 115–144 (LASMAYDRYVAICKPLLYTLIMSQRVCVQL). The chain crosses the membrane as a helical span at residues 145–165 (VIGPYSIGFVSTMVHIISAFV). The Extracellular portion of the chain corresponds to 166-198 (LPYCGPNLINHFFCDLLPVLSLACANTQMKKRL). The helical transmembrane segment at 199–219 (LFIVAGILGVFSGIIILVSYV) threads the bilayer. The Cytoplasmic segment spans residues 220–239 (YIAITILKISSADGRRKAFS). Residues 240 to 260 (TCSSHLTAVSILYGTLFFIYV) traverse the membrane as a helical segment. The Extracellular portion of the chain corresponds to 261–271 (RPSSSFSLDIN). The chain crosses the membrane as a helical span at residues 272–292 (KVVSLFYTTVIPMLNPFIYSL). At 293–318 (RNKEVKDALIRTFEKQFCYSFQDKIL) the chain is on the cytoplasmic side.

Belongs to the G-protein coupled receptor 1 family.

The protein resides in the cell membrane. Functionally, potential odorant receptor. The chain is Olfactory receptor 5G26 from Mus musculus (Mouse).